The following is a 201-amino-acid chain: Mediator of RNA polymerase II transcription subunit 19 (201 aa).

Positions G166 to E201 are disordered.

Belongs to the Mediator complex subunit 19 family. As to quaternary structure, component of the Mediator complex.

It is found in the nucleus. In terms of biological role, component of the Mediator complex, a coactivator involved in the regulated transcription of nearly all RNA polymerase II-dependent genes. Mediator functions as a bridge to convey information from gene-specific regulatory proteins to the basal RNA polymerase II transcription machinery. Mediator is recruited to promoters by direct interactions with regulatory proteins and serves as a scaffold for the assembly of a functional preinitiation complex with RNA polymerase II and the general transcription factors. This is Mediator of RNA polymerase II transcription subunit 19 (ROX3) from Candida glabrata (strain ATCC 2001 / BCRC 20586 / JCM 3761 / NBRC 0622 / NRRL Y-65 / CBS 138) (Yeast).